Reading from the N-terminus, the 313-residue chain is Glutathionyl-hydroquinone reductase PcpF (313 aa).

The active-site Nucleophile is C53. Glutathione-binding positions include W86, 119–122 (RVTI), and 137–138 (ES). The GST C-terminal domain maps to 161–285 (PAEFRPEIDR…INLRHAKAHY (125 aa)). Y184 serves as the catalytic Proton donor/acceptor.

The protein belongs to the GST superfamily. Xi-class GSH transferase family. Homodimer.

The enzyme catalyses 2-(glutathione-S-yl)-hydroquinone + glutathione = hydroquinone + glutathione disulfide. Its function is as follows. Catalyzes glutathione (GSH)-dependent reduction of glutathionyl-hydroquinones (GS-HQs) to the corresponding hydroquinones. Can act on halogenated substrates such as GS-2,6-dichloro-p-hydroquinone (GS-DiCH) and GS-trichloro-p-hydroquinone (GS-TriCH). Involved in the degradation of pentachlorophenol (PCP), a toxic pollutant. This Sphingobium chlorophenolicum protein is Glutathionyl-hydroquinone reductase PcpF.